The following is a 480-amino-acid chain: 3-isopropylmalate dehydratase large subunit (480 aa).

The [4Fe-4S] cluster site is built by cysteine 361, cysteine 421, and cysteine 424.

The protein belongs to the aconitase/IPM isomerase family. LeuC type 1 subfamily. Heterodimer of LeuC and LeuD. Requires [4Fe-4S] cluster as cofactor.

The catalysed reaction is (2R,3S)-3-isopropylmalate = (2S)-2-isopropylmalate. It functions in the pathway amino-acid biosynthesis; L-leucine biosynthesis; L-leucine from 3-methyl-2-oxobutanoate: step 2/4. Its function is as follows. Catalyzes the isomerization between 2-isopropylmalate and 3-isopropylmalate, via the formation of 2-isopropylmaleate. The protein is 3-isopropylmalate dehydratase large subunit of Corynebacterium diphtheriae (strain ATCC 700971 / NCTC 13129 / Biotype gravis).